Here is a 164-residue protein sequence, read N- to C-terminus: Kunitz-type trypsin inhibitor BrTI (164 aa).

It belongs to the leguminous Kunitz-type inhibitor family.

Its function is as follows. Inhibitor of trypsin and human plasma kallikrein with a Ki of 2.9 nM and 14.0 nM, respectively. Does not inhibit chymotrypsin, porcine pancreatic elastas, human neutrophil elastase, coagulation factor Xa, human thrombin, porcine pancreatic kallikrein or plasmin. This chain is Kunitz-type trypsin inhibitor BrTI, found in Bauhinia rufa (Orchid tree).